Reading from the N-terminus, the 555-residue chain is Cinnamate beta-D-glucosyltransferase (555 aa).

The active-site Proton acceptor is the His19. Residue His19 coordinates an anthocyanidin. Residues Gln344, His359, Trp362, Asn363, Ser364, and Glu367 each coordinate UDP-alpha-D-glucose. Residue Gly382 participates in an anthocyanidin binding. Asp383 and Gln384 together coordinate UDP-alpha-D-glucose.

The protein belongs to the UDP-glycosyltransferase family. Highest expression detected in fruit, with lower levels detected in flower and petiole. Barely detectable in leaf and root.

It carries out the reaction (E)-cinnamate + UDP-alpha-D-glucose = 1-O-(trans-cinnamoyl)-beta-D-glucose + UDP. Its function is as follows. Broad spectrum multifunctional glucosyltransferase. Catalyzes the formation of cinnamic acid and p-coumaric acid glucose esters during fruit ripening. Accepted substrates range from derivatives of cinnamic acid and benzoic acid to heterocyclic and aliphatic compounds, resulting in the formation of O- and S-glucose esters and O-glucosides. May also be involved in detoxification of xenobiotics. The polypeptide is Cinnamate beta-D-glucosyltransferase (Fragaria ananassa (Strawberry)).